The primary structure comprises 387 residues: Major outer membrane protein P.IA (387 aa).

The signal sequence occupies residues 1-19 (MRKKLTALVLSALPLAAVA).

This sequence belongs to the Gram-negative porin family. As to quaternary structure, homotrimer.

Its subcellular location is the cell outer membrane. Functionally, serves as a slightly cation selective porin. Major antigen on the gonococcal cell surface and it may have pathogenic properties in addition to its porin activity. The polypeptide is Major outer membrane protein P.IA (porA) (Neisseria meningitidis serogroup C).